The following is a 350-amino-acid chain: Flap endonuclease 1 (350 aa).

Residues methionine 1–arginine 102 form an N-domain region. Mg(2+) is bound by residues aspartate 31, aspartate 84, glutamate 156, glutamate 158, aspartate 177, aspartate 179, and aspartate 240. Residues alanine 120 to lysine 262 form an I-domain region. The interval lysine 341–phenylalanine 349 is interaction with PCNA.

This sequence belongs to the XPG/RAD2 endonuclease family. FEN1 subfamily. As to quaternary structure, interacts with PCNA. PCNA stimulates the nuclease activity without altering cleavage specificity. Requires Mg(2+) as cofactor.

Functionally, structure-specific nuclease with 5'-flap endonuclease and 5'-3' exonuclease activities involved in DNA replication and repair. During DNA replication, cleaves the 5'-overhanging flap structure that is generated by displacement synthesis when DNA polymerase encounters the 5'-end of a downstream Okazaki fragment. Binds the unpaired 3'-DNA end and kinks the DNA to facilitate 5' cleavage specificity. Cleaves one nucleotide into the double-stranded DNA from the junction in flap DNA, leaving a nick for ligation. Also involved in the base excision repair (BER) pathway. Acts as a genome stabilization factor that prevents flaps from equilibrating into structures that lead to duplications and deletions. Also possesses 5'-3' exonuclease activity on nicked or gapped double-stranded DNA. The chain is Flap endonuclease 1 from Staphylothermus marinus (strain ATCC 43588 / DSM 3639 / JCM 9404 / F1).